A 252-amino-acid chain; its full sequence is Chaplin-A (252 aa).

The first 20 residues, 1–20, serve as a signal peptide directing secretion; that stretch reads MVAAAAATGILSLCGSPALA. In terms of domain architecture, Chaplin 1 spans 31-71; sequence SPGAVSGNALQVPVDVPVNACGNTVDVIAALNPAFGNECEN. Disordered regions lie at residues 71-121 and 150-224; these read NASD…GNNA and CEND…GSEG. The segment covering 86 to 108 has biased composition (low complexity); it reads EDASSSSSSSTSASSSGSHADGA. A Chaplin 2 domain is found at 112–152; it reads SPGVGSGNNAQVPVDVPVNLCGNTVDVIAALNPVFGNKCEN. The segment covering 153–165 has biased composition (acidic residues); it reads DAEEPPGYGEEEP. Over residues 210-224 the composition is skewed to low complexity; the sequence is QTEQPPALAETGSEG. The short motif at 217–221 is the LPXTG sorting signal element; the sequence is LAETG. Propeptides (removed by sortase) lie at residues 219–252 and 221–252; these read ETGSEGTLGAAAAGAVLIAGGAILYRRGRALSGR and GSEGTLGAAAAGAVLIAGGAILYRRGRALSGR. Pentaglycyl murein peptidoglycan amidated threonine is present on threonine 220.

This sequence belongs to the chaplin family. Long chaplin subfamily.

It localises to the secreted. The protein localises to the cell wall. Functionally, one of 8 partially redundant surface-active proteins required for efficient formation of aerial mycelium; the short chaplins assemble into a hydrophobic, amyloidal fibrillar surface layer that envelopes and protects aerial hyphae and spores, presumably anchored to the long chaplins. Chaplins have an overlapping function with the surface-active SapB peptide; chaplins are essential on minimal medium while on rich medium both chaplins and SapB are required for efficient aerial hyphae formation. A minimal chaplin strain capable of forming aerial mycelium/hyphae on minimal medium contains ChpC, ChpE and ChpH. The strain also has restored rodlet formation on the hyphae surface. A second minimal chaplin strain with ChpA, ChpD and ChpE makes slightly less robust hyphae. The long chaplins (ChpA, ChpB, ChpC) are not absolutely necessary for short chaplin localization or rodlet formation, but probably play a role in initiating aerial hyphae development. Chaplins are also involved in cell attachment to a hydrophobic surface. The sequence is that of Chaplin-A from Streptomyces coelicolor (strain ATCC BAA-471 / A3(2) / M145).